Reading from the N-terminus, the 417-residue chain is Tyrosine--tRNA ligase (417 aa).

An L-tyrosine-binding site is contributed by tyrosine 34. The 'HIGH' region motif lies at 39-48 (PTGDSMHIGH). Residues tyrosine 165 and glutamine 169 each coordinate L-tyrosine. Positions 227 to 231 (KFGKS) match the 'KMSKS' region motif. Lysine 230 provides a ligand contact to ATP. The region spanning 349–417 (ENIVLWLVDT…KKKYFLARVK (69 aa)) is the S4 RNA-binding domain.

Belongs to the class-I aminoacyl-tRNA synthetase family. TyrS type 1 subfamily. Homodimer.

The protein resides in the cytoplasm. The catalysed reaction is tRNA(Tyr) + L-tyrosine + ATP = L-tyrosyl-tRNA(Tyr) + AMP + diphosphate + H(+). Catalyzes the attachment of tyrosine to tRNA(Tyr) in a two-step reaction: tyrosine is first activated by ATP to form Tyr-AMP and then transferred to the acceptor end of tRNA(Tyr). The chain is Tyrosine--tRNA ligase from Pediococcus pentosaceus (strain ATCC 25745 / CCUG 21536 / LMG 10740 / 183-1w).